Here is a 213-residue protein sequence, read N- to C-terminus: Holliday junction resolvase RecU (213 aa).

Residues threonine 99, aspartate 101, glutamate 114, and glutamine 133 each coordinate Mg(2+).

This sequence belongs to the RecU family. Mg(2+) is required as a cofactor.

Its subcellular location is the cytoplasm. The catalysed reaction is Endonucleolytic cleavage at a junction such as a reciprocal single-stranded crossover between two homologous DNA duplexes (Holliday junction).. In terms of biological role, endonuclease that resolves Holliday junction intermediates in genetic recombination. Cleaves mobile four-strand junctions by introducing symmetrical nicks in paired strands. Promotes annealing of linear ssDNA with homologous dsDNA. Required for DNA repair, homologous recombination and chromosome segregation. The sequence is that of Holliday junction resolvase RecU from Lactococcus lactis subsp. lactis (strain IL1403) (Streptococcus lactis).